A 320-amino-acid chain; its full sequence is Cytochrome f (320 aa).

An N-terminal signal peptide occupies residues 1-35 (MENRNTFSWVKEQITRSISVSIMIYVITRTSISNA). Heme is bound by residues Tyr-36, Cys-56, Cys-59, and His-60. The helical transmembrane segment at 286–306 (VQGLLFFFASVILAQVFLVLK) threads the bilayer.

Belongs to the cytochrome f family. The 4 large subunits of the cytochrome b6-f complex are cytochrome b6, subunit IV (17 kDa polypeptide, petD), cytochrome f and the Rieske protein, while the 4 small subunits are PetG, PetL, PetM and PetN. The complex functions as a dimer. The cofactor is heme.

It is found in the plastid. The protein localises to the chloroplast thylakoid membrane. Functionally, component of the cytochrome b6-f complex, which mediates electron transfer between photosystem II (PSII) and photosystem I (PSI), cyclic electron flow around PSI, and state transitions. This is Cytochrome f from Hordeum vulgare (Barley).